A 754-amino-acid chain; its full sequence is Exocyst complex component EXO84A (754 aa).

2 disordered regions span residues 514-540 (RILPQGTSQSTPRRGSSDRQNRPEQRE) and 734-754 (GHGERDVTSPSVSSAKSYTSN). A compositionally biased stretch (polar residues) spans 518–527 (QGTSQSTPRR). Residues 528–540 (GSSDRQNRPEQRE) show a composition bias toward basic and acidic residues. Positions 741 to 754 (TSPSVSSAKSYTSN) are enriched in polar residues.

It belongs to the EXO84 family. In terms of assembly, the exocyst complex is composed of SEC3, SEC5, SEC6, SEC8, SEC10, EXO70A1 and EXO84.

Component of the exocyst complex involved in the docking of exocytic vesicles with fusion sites on the plasma membrane during regulated or polarized secretion. Involved in polarized cell growth and organ morphogenesis. During cytokinesis, involved in cell plate initiation, cell plate maturation and formation of new primary cell wall. The protein is Exocyst complex component EXO84A (EXO84A) of Arabidopsis thaliana (Mouse-ear cress).